We begin with the raw amino-acid sequence, 148 residues long: MRNQLLFALAFIPTIAAAASNCEVNVSAGDSMAFNTRSIDIPKSCKEFTVNFAHTGTASKAGMGHNWVLARSADVNDLAKAGVEAGIDKNFIPPNDPRVLAYTPLVGGGEKTSVTFKPSILKDGESYSFYCSFAFHSFMMRGTVKLVD.

The N-terminal stretch at 1–18 (MRNQLLFALAFIPTIAAA) is a signal peptide. Positions 19–148 (ASNCEVNVSA…MMRGTVKLVD (130 aa)) constitute a Plastocyanin-like domain. The cysteines at positions 22 and 45 are disulfide-linked. Cu cation contacts are provided by H65, C131, H136, and M140.

Its subcellular location is the periplasm. It functions in the pathway one-carbon metabolism; methylamine degradation. In terms of biological role, probable electron acceptor for methylamine dehydrogenase. This is Azurin (azu) from Methylobacillus flagellatus (strain ATCC 51484 / DSM 6875 / VKM B-1610 / KT).